The sequence spans 52 residues: Large ribosomal subunit protein eL39 (52 aa).

Belongs to the eukaryotic ribosomal protein eL39 family.

The sequence is that of Large ribosomal subunit protein eL39 from Caldivirga maquilingensis (strain ATCC 700844 / DSM 13496 / JCM 10307 / IC-167).